The primary structure comprises 162 residues: Putative auxin-responsive protein IAA28 (162 aa).

The PB1 domain occupies 23–118; the sequence is SRFVKVFMHG…TVKRIYIVPA (96 aa). The interval 122-141 is disordered; the sequence is NESEYQEEEEDNAAAAATAD.

The protein belongs to the Aux/IAA family. As to quaternary structure, homodimers and heterodimers.

It localises to the nucleus. Its function is as follows. Aux/IAA proteins are short-lived transcriptional factors that function as repressors of early auxin response genes at low auxin concentrations. The sequence is that of Putative auxin-responsive protein IAA28 (IAA28) from Oryza sativa subsp. japonica (Rice).